Reading from the N-terminus, the 262-residue chain is uncharacterized protein (262 aa).

6 helical membrane-spanning segments follow: residues 21-41 (ILITYFLCWAGFLFSFSVGKF), 94-114 (IVSNFMGCLIIMFALGALAYL), 139-159 (LLILFIFTVINPLTGLIGVNL), 164-184 (LIAVLPHGFFEFFGFATAVVV), 205-225 (IVILIACSFIFIFIAGMLEPI), and 240-260 (LLAAFATGYKNLFLYLISMLF).

The protein localises to the cell membrane. This is an uncharacterized protein from Methanocaldococcus jannaschii (strain ATCC 43067 / DSM 2661 / JAL-1 / JCM 10045 / NBRC 100440) (Methanococcus jannaschii).